We begin with the raw amino-acid sequence, 273 residues long: 4-hydroxy-tetrahydrodipicolinate reductase (273 aa).

Residues 8–13, E34, 102–104, and 128–131 contribute to the NAD(+) site; these read GCAGNM, GTT, and SPNM. Catalysis depends on H161, which acts as the Proton donor/acceptor. Position 162 (H162) interacts with (S)-2,3,4,5-tetrahydrodipicolinate. The Proton donor role is filled by K165. Position 171–172 (171–172) interacts with (S)-2,3,4,5-tetrahydrodipicolinate; sequence GT.

It belongs to the DapB family.

The protein localises to the cytoplasm. It catalyses the reaction (S)-2,3,4,5-tetrahydrodipicolinate + NAD(+) + H2O = (2S,4S)-4-hydroxy-2,3,4,5-tetrahydrodipicolinate + NADH + H(+). The catalysed reaction is (S)-2,3,4,5-tetrahydrodipicolinate + NADP(+) + H2O = (2S,4S)-4-hydroxy-2,3,4,5-tetrahydrodipicolinate + NADPH + H(+). It functions in the pathway amino-acid biosynthesis; L-lysine biosynthesis via DAP pathway; (S)-tetrahydrodipicolinate from L-aspartate: step 4/4. In terms of biological role, catalyzes the conversion of 4-hydroxy-tetrahydrodipicolinate (HTPA) to tetrahydrodipicolinate. The protein is 4-hydroxy-tetrahydrodipicolinate reductase of Methanosphaera stadtmanae (strain ATCC 43021 / DSM 3091 / JCM 11832 / MCB-3).